Consider the following 601-residue polypeptide: Glutamine--fructose-6-phosphate aminotransferase [isomerizing] (601 aa).

C2 functions as the Nucleophile; for GATase activity in the catalytic mechanism. Positions 2-216 (CGIVGYIGTN…DKEIVIVTKD (215 aa)) constitute a Glutamine amidotransferase type-2 domain. SIS domains are found at residues 282–421 (IIDE…EIGD) and 453–591 (IAGE…VDKP). Catalysis depends on K596, which acts as the For Fru-6P isomerization activity.

Homodimer.

It is found in the cytoplasm. It catalyses the reaction D-fructose 6-phosphate + L-glutamine = D-glucosamine 6-phosphate + L-glutamate. Its function is as follows. Catalyzes the first step in hexosamine metabolism, converting fructose-6P into glucosamine-6P using glutamine as a nitrogen source. This chain is Glutamine--fructose-6-phosphate aminotransferase [isomerizing], found in Listeria monocytogenes serovar 1/2a (strain ATCC BAA-679 / EGD-e).